We begin with the raw amino-acid sequence, 768 residues long: MEINEEAMAAHKRAFLDFLDQDVGKGVYMQAVRDMVQNKRHRLIIGMDDLRNHNLDLARRVIRTPGEYMQPASDAVSEVARNLDPKFLKEGERVMVGFSGPFGFHRVTPRDLMSSFIGTMVCVEGIVTKCSLVRPKVVKSVHFCPVTGDFLSREYRDITSFVGLPTGSVYPTRDDNGNLLVTEYGMCEYKDHQTLSMQEVPENSAPGQLPRTVDVIVEDDLVDCCKPGDRVSIVGVYKALPGKSKGSVSGVFRTVLIANNVSLLNKEANAPVYTREDLKRMKEISRRNDTFDLLGNSLAPSIYGHLWIKKAVVLLMLGGVEKNLKNGTHLRGDINMMMVGDPSVAKSQLLRAVMNIAPLAISTTGRGSSGVGLTAAVTSDQETGERRLEAGAMVLADRGVVCIDEFDKMNDQDRVAIHEVMEQQTVTIAKAGIHASLNARCSVIAAANPIYGTYDRSLTPTKNIGLPDSLLSRFDLLFIVLDQMDPEIDRQISEHVARMHRYCTDDGGARSLDKEGYAEEDDGDANAAIFVKYDRMLHGQDRRRGKKSKQDRLTVKFLKKYIHYAKNLIQPRLTDEASDHIATSYAELRDGSANAKSGGGTLPITARTLETIIRLSTAHAKMKLRHEVLKSDVEAALQVLNFAIYHKELTEMEEREQREMEMKQQADHDAGATGGTVDGHGSSGNDPMDVDVGSNDQNVSAERIQAFEALLGQHVLANHIDQMSIDEIEQMVNRESTAPYTRSQVEFILERMQDANRVMIRDGVVRII.

Positions 290 to 497 (TFDLLGNSLA…IDRQISEHVA (208 aa)) constitute an MCM domain. 340–347 (GDPSVAKS) is an ATP binding site. The short motif at 472-475 (SRFD) is the Arginine finger element. Basic and acidic residues predominate over residues 661–670 (EMKQQADHDA). Positions 661–690 (EMKQQADHDAGATGGTVDGHGSSGNDPMDV) are disordered. The segment covering 672–682 (ATGGTVDGHGS) has biased composition (gly residues).

This sequence belongs to the MCM family.

The protein resides in the nucleus. It catalyses the reaction ATP + H2O = ADP + phosphate + H(+). Functionally, acts as a factor that allows the DNA to undergo a single round of replication per cell cycle. Required for DNA replication and cell proliferation. May act as a component of the MCM complex which is the putative replicative helicase of the replication licensing system in eukaryotic cells. This chain is DNA replication licensing factor MCM3 homolog 3 (ROA3), found in Zea mays (Maize).